The chain runs to 152 residues: Xanthine-guanine phosphoribosyltransferase (152 aa).

5-phospho-alpha-D-ribose 1-diphosphate-binding positions include 37–38, Arg69, and 88–96; these read RG and DDLVDTGGT. GMP is bound at residue Arg69. Asp89 is a binding site for Mg(2+). Guanine-binding residues include Asp92 and Ile135. Xanthine is bound by residues Asp92 and Ile135. Residues 92 to 96 and 134 to 135 each bind GMP; these read DTGGT and WI.

This sequence belongs to the purine/pyrimidine phosphoribosyltransferase family. XGPT subfamily. As to quaternary structure, homotetramer. Mg(2+) serves as cofactor.

It localises to the cell inner membrane. It catalyses the reaction GMP + diphosphate = guanine + 5-phospho-alpha-D-ribose 1-diphosphate. It carries out the reaction XMP + diphosphate = xanthine + 5-phospho-alpha-D-ribose 1-diphosphate. The enzyme catalyses IMP + diphosphate = hypoxanthine + 5-phospho-alpha-D-ribose 1-diphosphate. It participates in purine metabolism; GMP biosynthesis via salvage pathway; GMP from guanine: step 1/1. Its pathway is purine metabolism; XMP biosynthesis via salvage pathway; XMP from xanthine: step 1/1. In terms of biological role, purine salvage pathway enzyme that catalyzes the transfer of the ribosyl-5-phosphate group from 5-phospho-alpha-D-ribose 1-diphosphate (PRPP) to the N9 position of the 6-oxopurines guanine and xanthine to form the corresponding ribonucleotides GMP (guanosine 5'-monophosphate) and XMP (xanthosine 5'-monophosphate), with the release of PPi. To a lesser extent, also acts on hypoxanthine. The polypeptide is Xanthine-guanine phosphoribosyltransferase (Photobacterium profundum (strain SS9)).